We begin with the raw amino-acid sequence, 1884 residues long: Fatty acid synthase subunit alpha (1884 aa).

The disordered stretch occupies residues 91–141 (TPDPAEPPAAEEPKAETGKESAPAASAAAAAATQPAAAVAPPPQSAGPVES). Positions 111 to 129 (SAPAASAAAAAATQPAAAV) are enriched in low complexity. One can recognise a Carrier domain in the interval 147-222 (VKASLLIHVL…EQFQDTFSGS (76 aa)). An O-(pantetheine 4'-phosphoryl)serine modification is found at Ser-182. Positions 583–613 (TEQTTQDALAIPTGSNTPTEEDELSTASDDD) are disordered. Positions 584–600 (EQTTQDALAIPTGSNTP) are enriched in polar residues. Residues 601–613 (TEEDELSTASDDD) show a composition bias toward acidic residues. The interval 677-873 (DKYVLVTGAG…CGAIIGWTRG (197 aa)) is beta-ketoacyl reductase. Residues 1120–1660 (IQEVVIQHDL…QKGAQAVVVH (541 aa)) enclose the Ketosynthase family 3 (KS3) domain. Catalysis depends on for beta-ketoacyl synthase activity residues Cys-1303, His-1545, and His-1586. Residues Asp-1770, Val-1771, and Glu-1772 each coordinate Mg(2+). Acetyl-CoA is bound by residues 1770-1772 (DVE), Tyr-1796, Ser-1806, 1815-1825 (EATFKALGVSS), 1839-1842 (RDGN), and 1869-1871 (ISH). Mg(2+) contacts are provided by Ser-1870 and His-1871.

The protein belongs to the thiolase-like superfamily. Fungal fatty acid synthetase subunit alpha family. In terms of assembly, fatty acid synthase is composed of alpha and beta subunits.

It catalyses the reaction acetyl-CoA + n malonyl-CoA + 2n NADPH + 4n H(+) = a long-chain-acyl-CoA + n CoA + n CO2 + 2n NADP(+).. It carries out the reaction a fatty acyl-[ACP] + malonyl-[ACP] + H(+) = a 3-oxoacyl-[ACP] + holo-[ACP] + CO2. The enzyme catalyses a (3R)-hydroxyacyl-[ACP] + NADP(+) = a 3-oxoacyl-[ACP] + NADPH + H(+). Functionally, fatty acid synthetase catalyzes the formation of long-chain fatty acids from acetyl-CoA, malonyl-CoA and NADPH. The alpha subunit contains domains for: acyl carrier protein, 3-oxoacyl-[acyl-carrier-protein] reductase, and 3-oxoacyl-[acyl-carrier-protein] synthase. This is Fatty acid synthase subunit alpha (FAS2) from Candida parapsilosis (strain CDC 317 / ATCC MYA-4646) (Yeast).